We begin with the raw amino-acid sequence, 119 residues long: Large ribosomal subunit protein bL19 (119 aa).

This sequence belongs to the bacterial ribosomal protein bL19 family.

Functionally, this protein is located at the 30S-50S ribosomal subunit interface and may play a role in the structure and function of the aminoacyl-tRNA binding site. The polypeptide is Large ribosomal subunit protein bL19 (Leuconostoc citreum (strain KM20)).